The sequence spans 269 residues: Thiazole synthase (269 aa).

K109 acts as the Schiff-base intermediate with DXP in catalysis. Residues G170, A196 to G197, and N218 to T219 each bind 1-deoxy-D-xylulose 5-phosphate.

This sequence belongs to the ThiG family. In terms of assembly, homotetramer. Forms heterodimers with either ThiH or ThiS.

Its subcellular location is the plastid. The protein resides in the chloroplast. It catalyses the reaction [ThiS sulfur-carrier protein]-C-terminal-Gly-aminoethanethioate + 2-iminoacetate + 1-deoxy-D-xylulose 5-phosphate = [ThiS sulfur-carrier protein]-C-terminal Gly-Gly + 2-[(2R,5Z)-2-carboxy-4-methylthiazol-5(2H)-ylidene]ethyl phosphate + 2 H2O + H(+). It functions in the pathway cofactor biosynthesis; thiamine diphosphate biosynthesis. Catalyzes the rearrangement of 1-deoxy-D-xylulose 5-phosphate (DXP) to produce the thiazole phosphate moiety of thiamine. Sulfur is provided by the thiocarboxylate moiety of the carrier protein ThiS. In vitro, sulfur can be provided by H(2)S. The protein is Thiazole synthase of Phaeodactylum tricornutum (strain CCAP 1055/1).